A 458-amino-acid polypeptide reads, in one-letter code: Pentatricopeptide repeat-containing protein At1g77405 (458 aa).

PPR repeat units lie at residues 164–198 (TTAS…HCKP), 199–233 (DVYA…GFRY), 236–271 (DTYT…NRMF), 282–316 (DVVT…GCVP), 317–351 (NQVT…GHGV), 353–387 (GSST…GLVP), and 388–419 (REYT…MREG).

The protein belongs to the PPR family. P subfamily.

This chain is Pentatricopeptide repeat-containing protein At1g77405, found in Arabidopsis thaliana (Mouse-ear cress).